A 1925-amino-acid polypeptide reads, in one-letter code: Methyltransferase/helicase/RNA-directed RNA polymerase (1925 aa).

The Alphavirus-like MT domain maps to Arg-45–Leu-252. In terms of domain architecture, (+)RNA virus helicase ATP-binding spans Gly-533 to Phe-693. The (+)RNA virus helicase C-terminal domain maps to Asn-694–Pro-834. 6 disordered regions span residues Arg-737–Glu-760, Arg-1310–Thr-1445, Gln-1468–Ala-1636, Asn-1666–Pro-1727, Thr-1806–Pro-1847, and Ser-1905–Pro-1925. A compositionally biased stretch (basic and acidic residues) spans Gln-1319 to Pro-1329. A compositionally biased stretch (polar residues) spans Ala-1342 to Arg-1354. Composition is skewed to basic and acidic residues over residues Ser-1355–Thr-1427, Ser-1482–Asp-1527, Val-1540–His-1552, and Pro-1578–Asn-1591. Positions Gly-1626–Ala-1636 are enriched in low complexity. A compositionally biased stretch (basic and acidic residues) spans Gln-1672–Arg-1682. The segment covering Ser-1905 to Ser-1918 has biased composition (polar residues).

The protein belongs to the ssRNA positive-strand viruses RNA-directed RNA polymerase family.

The catalysed reaction is RNA(n) + a ribonucleoside 5'-triphosphate = RNA(n+1) + diphosphate. It catalyses the reaction ATP + H2O = ADP + phosphate + H(+). Functionally, RNA-dependent RNA polymerase replicates the viral genome. This Nudaurelia capensis beta virus (isolate Pine emperor moth/South Africa) (NbetaV) protein is Methyltransferase/helicase/RNA-directed RNA polymerase.